The primary structure comprises 162 residues: UPF0262 protein HNE_1347 (162 aa).

Belongs to the UPF0262 family.

The chain is UPF0262 protein HNE_1347 from Hyphomonas neptunium (strain ATCC 15444).